We begin with the raw amino-acid sequence, 330 residues long: Tryptophan--tRNA ligase (330 aa).

ATP is bound by residues 10-12 and 18-19; these read QAT and GN. The 'HIGH' region signature appears at 11–19; sequence ATGSLHLGN. D134 contacts L-tryptophan. Residues 146 to 148, I186, and 195 to 199 contribute to the ATP site; these read GED and KMSKS. The 'KMSKS' region signature appears at 195–199; it reads KMSKS.

This sequence belongs to the class-I aminoacyl-tRNA synthetase family. As to quaternary structure, homodimer.

It localises to the cytoplasm. It catalyses the reaction tRNA(Trp) + L-tryptophan + ATP = L-tryptophyl-tRNA(Trp) + AMP + diphosphate + H(+). Its function is as follows. Catalyzes the attachment of tryptophan to tRNA(Trp). This Rickettsia conorii (strain ATCC VR-613 / Malish 7) protein is Tryptophan--tRNA ligase.